The sequence spans 426 residues: Trigger factor (426 aa).

In terms of domain architecture, PPIase FKBP-type spans 160–240 (GDTVIGDVTK…IKEVKHLELP (81 aa)).

It belongs to the FKBP-type PPIase family. Tig subfamily.

The protein localises to the cytoplasm. The enzyme catalyses [protein]-peptidylproline (omega=180) = [protein]-peptidylproline (omega=0). In terms of biological role, involved in protein export. Acts as a chaperone by maintaining the newly synthesized protein in an open conformation. Functions as a peptidyl-prolyl cis-trans isomerase. This chain is Trigger factor, found in Chlorobaculum tepidum (strain ATCC 49652 / DSM 12025 / NBRC 103806 / TLS) (Chlorobium tepidum).